The primary structure comprises 164 residues: UPF0303 protein Smed_2872 (164 aa).

This sequence belongs to the UPF0303 family.

In Sinorhizobium medicae (strain WSM419) (Ensifer medicae), this protein is UPF0303 protein Smed_2872.